The following is a 70-amino-acid chain: Small ribosomal subunit protein bS21 (70 aa).

The protein belongs to the bacterial ribosomal protein bS21 family.

In Nitrosospira multiformis (strain ATCC 25196 / NCIMB 11849 / C 71), this protein is Small ribosomal subunit protein bS21.